The sequence spans 1775 residues: Internalin I (1775 aa).

The N-terminal stretch at 1–28 (MKKKFSIVIISVLLLGYLAPFDTLLVGA) is a signal peptide. Over residues 36–50 (DTTVKTAETETATEA) the composition is skewed to low complexity. Residues 36–97 (DTTVKTAETE…SNIKTEINTD (62 aa)) are disordered. Residues 58-85 (DNEKAEEPKEAEASKETTEKEEKAKTKE) are compositionally biased toward basic and acidic residues. LRR repeat units lie at residues 152-176 (AISQLDLSGETGNDPTDISNIEGLQ), 180-201 (NLTSLNLSENNISDLAPIKDLV), 202-224 (NLVSLNLSSNRTLVNLSGVEGLV), 225-247 (NLQELNVSANKALEDISQVAALP), 248-269 (VLKEISAQGCNIKTLELDNPAG), 274-295 (ELETFYLQENDLTDLTSLAKLP), 296-318 (KLKNLYIKGNASLKSLATLKGAT), 319-341 (KLQLIDASNCTDLETLGDISGLS), 342-364 (ELEMIQLSGCSKLKEITSLKDLP), 365-386 (NLVNITADSCAIEDLGTLNNLP), 387-409 (KLQTLILSDNKDLTNINAITDMP), 410-431 (QLKTLALDGCGITSIGTLDNLP), 432-453 (KLEKLDLKENQLTSISEINDLP), 454-475 (RLSYLDVSVNYLTTIGELKKLP), 476-497 (LLEWLNVSSNRLSDVSTLTNFP), 498-519 (SLNYINVSNNVIRTVGKMTELP), 520-541 (SLKEFYAQNNNVSDISMIHDMP), 542-563 (NLRKVDASNNLITNIGTFDNLP), 564-585 (KLQNLDVHSNRITNTSVIHDLP), 586-607 (SLETFYAQNNLITNIGTMDNLP), 608-629 (ELTYVDLSFNRIPSLAPIGDLP), 630-650 (KLEILKVTDNYSYLRSLGTMD), 654-675 (KLRNLELQNNYLNYTGTEGNLS), 682-704 (NLTELNLRDNGYISDISGLSTLS), 705-726 (RLIYLNLDSNKIKDISALSNLT), 727-748 (TLQELTLENNQIEDISALSDLD), and 749-770 (NLNKLALSKNKIIDISPAANMV). The LRRCT domain occupies 782–869 (TYTLPTVLSY…SAVKVTANAE (88 aa)). MucBP domains follow at residues 1507–1566 (DAAA…EQTV), 1572–1631 (AIEP…PQTI), and 1641–1702 (SKKS…SQTV). Residues 1713–1737 (SKDEPKVKGKTNQPPSADTKLKVDN) form a disordered region. The short motif at 1740–1744 (LPATG) is the LPXTG sorting signal element. Position 1743 is a pentaglycyl murein peptidoglycan amidated threonine (T1743). Residues 1744 to 1775 (GDTENMALAVLIGFNMLLVASIFLFRKPKTNQ) constitute a propeptide, removed by sortase.

It belongs to the internalin family.

It localises to the secreted. It is found in the cell wall. Its function is as follows. A role in virulence could not be demonstrated. The chain is Internalin I (inlI) from Listeria monocytogenes serotype 4b (strain F2365).